The chain runs to 307 residues: 4-hydroxythreonine-4-phosphate dehydrogenase (307 aa).

Substrate-binding residues include histidine 126 and threonine 127. A divalent metal cation is bound by residues histidine 156, histidine 195, and histidine 251. Substrate contacts are provided by lysine 259, asparagine 268, and arginine 277.

It belongs to the PdxA family. As to quaternary structure, homodimer. It depends on Zn(2+) as a cofactor. The cofactor is Mg(2+). Co(2+) serves as cofactor.

Its subcellular location is the cytoplasm. The catalysed reaction is 4-(phosphooxy)-L-threonine + NAD(+) = 3-amino-2-oxopropyl phosphate + CO2 + NADH. The protein operates within cofactor biosynthesis; pyridoxine 5'-phosphate biosynthesis; pyridoxine 5'-phosphate from D-erythrose 4-phosphate: step 4/5. Functionally, catalyzes the NAD(P)-dependent oxidation of 4-(phosphooxy)-L-threonine (HTP) into 2-amino-3-oxo-4-(phosphooxy)butyric acid which spontaneously decarboxylates to form 3-amino-2-oxopropyl phosphate (AHAP). The protein is 4-hydroxythreonine-4-phosphate dehydrogenase of Helicobacter pylori (strain G27).